The following is a 265-amino-acid chain: Probable autolysin SsaALP (265 aa).

A signal peptide spans 1–25; sequence MKKLAFAITATSGAAAFLTHHDAQA. LysM domains lie at 27–70 and 89–132; these read TQHT…VISV and SSHT…TLQI. Residues 72–92 are disordered; the sequence is GSDAQNTSNTSPQAGSASSHT. Polar residues predominate over residues 74–92; sequence DAQNTSNTSPQAGSASSHT. The 125-residue stretch at 141 to 265 folds into the Peptidase C51 domain; it reads TPTATTGSNG…SEVSSYAFIH (125 aa).

It carries out the reaction Hydrolyzes the link between N-acetylmuramoyl residues and L-amino acid residues in certain cell-wall glycopeptides.. In terms of biological role, has weak lytic activity toward S.aureus cells. The polypeptide is Probable autolysin SsaALP (Staphylococcus aureus (strain NCTC 8325 / PS 47)).